The primary structure comprises 135 residues: Small ribosomal subunit protein eS24A (135 aa).

S2 bears the N-acetylserine mark. Position 14 is a phosphoserine (S14). Residue K21 forms a Glycyl lysine isopeptide (Lys-Gly) (interchain with G-Cter in ubiquitin) linkage. S56 carries the post-translational modification Phosphoserine. A disordered region spans residues 102 to 135; that stretch reads KASRQQRKQKKNRDKKIFGTGKRLAKKVARRNAD. Basic residues-rich tracts occupy residues 105–115 and 124–135; these read RQQRKQKKNRD and RLAKKVARRNAD.

It belongs to the eukaryotic ribosomal protein eS24 family. Component of the small ribosomal subunit (SSU). Mature yeast ribosomes consist of a small (40S) and a large (60S) subunit. The 40S small subunit contains 1 molecule of ribosomal RNA (18S rRNA) and 33 different proteins (encoded by 57 genes). The large 60S subunit contains 3 rRNA molecules (25S, 5.8S and 5S rRNA) and 46 different proteins (encoded by 81 genes). Post-translationally, N-terminally acetylated by acetyltransferase NatA. Also partially acetylated by NatC.

The protein resides in the cytoplasm. In terms of biological role, component of the ribosome, a large ribonucleoprotein complex responsible for the synthesis of proteins in the cell. The small ribosomal subunit (SSU) binds messenger RNAs (mRNAs) and translates the encoded message by selecting cognate aminoacyl-transfer RNA (tRNA) molecules. The large subunit (LSU) contains the ribosomal catalytic site termed the peptidyl transferase center (PTC), which catalyzes the formation of peptide bonds, thereby polymerizing the amino acids delivered by tRNAs into a polypeptide chain. The nascent polypeptides leave the ribosome through a tunnel in the LSU and interact with protein factors that function in enzymatic processing, targeting, and the membrane insertion of nascent chains at the exit of the ribosomal tunnel. This chain is Small ribosomal subunit protein eS24A, found in Saccharomyces cerevisiae (strain ATCC 204508 / S288c) (Baker's yeast).